Consider the following 173-residue polypeptide: MIAQEREARINGEITAKEVRLISESGEQLGVVSVREALAMAEGQDVDLVEISPTAKPPVCKLMDYGKYKYQQAKKRDEAKKNQKQVQIKEIKFRPGTDEGDYQIKMRNINRFLADGDKVKVTLRFRGREMAHQQLGAQLLERVKEDLAEVAQIESFPKMEGRQMVMMIAPKKK.

It belongs to the IF-3 family. In terms of assembly, monomer.

Its subcellular location is the cytoplasm. In terms of biological role, IF-3 binds to the 30S ribosomal subunit and shifts the equilibrium between 70S ribosomes and their 50S and 30S subunits in favor of the free subunits, thus enhancing the availability of 30S subunits on which protein synthesis initiation begins. This chain is Translation initiation factor IF-3, found in Neisseria gonorrhoeae (strain ATCC 700825 / FA 1090).